The chain runs to 559 residues: Germacrene A synthase 1 (559 aa).

Positions 312, 316, 456, 460, and 464 each coordinate Mg(2+). The DDXXD motif signature appears at 312 to 316 (DDTYD).

This sequence belongs to the terpene synthase family. In terms of assembly, monomer. Requires Mg(2+) as cofactor. In terms of tissue distribution, mainly expressed in sunflower trichomes.

The catalysed reaction is (2E,6E)-farnesyl diphosphate = (+)-(R)-germacrene A + diphosphate. It participates in secondary metabolite biosynthesis; terpenoid biosynthesis. Its function is as follows. Sesquiterpene synthase involved in germacrene A biosynthesis. Germacrene A is a precursor of several sesquiterpene lactones. In Helianthus annuus (Common sunflower), this protein is Germacrene A synthase 1.